A 153-amino-acid chain; its full sequence is 3-hydroxyacyl-[acyl-carrier-protein] dehydratase FabZ (153 aa).

The active site involves His-58.

It belongs to the thioester dehydratase family. FabZ subfamily.

The protein resides in the cytoplasm. It catalyses the reaction a (3R)-hydroxyacyl-[ACP] = a (2E)-enoyl-[ACP] + H2O. Involved in unsaturated fatty acids biosynthesis. Catalyzes the dehydration of short chain beta-hydroxyacyl-ACPs and long chain saturated and unsaturated beta-hydroxyacyl-ACPs. The polypeptide is 3-hydroxyacyl-[acyl-carrier-protein] dehydratase FabZ (Bradyrhizobium diazoefficiens (strain JCM 10833 / BCRC 13528 / IAM 13628 / NBRC 14792 / USDA 110)).